Reading from the N-terminus, the 424-residue chain is Interferon regulatory factor 8 (424 aa).

Positions 7 to 114 (GRRLRQWLIE…EPYKVYRIVP (108 aa)) form a DNA-binding region, IRF tryptophan pentad repeat.

It belongs to the IRF family. In terms of assembly, interacts with COPS2. Interacts (via C-terminus) with TRIM21 (via C-terminus). Interacts with the BATF-JUNB heterodimer. Interacts with BATF (via bZIP domain); the interaction is direct. Interacts with SPI1. Ubiquitinated. Ubiquitination by TRIM21 in macrophages, a process that is strongly increased upon interferon gamma stimulation, leds to the enhanced transcriptional activity of target cytokine genes. Ubiquitination leads to its degradation by the proteasome. Post-translationally, sumoylated with SUMO3. Desumoylated by SENP1. As to expression, expressed in bone marrow macrophages (at protein level). Mainly expressed in lymphoid tissues. Predominantly expressed in CD8(+)-expressing dendritic cells.

The protein localises to the nucleus. Its subcellular location is the cytoplasm. In terms of biological role, transcription factor that specifically binds to the upstream regulatory region of type I interferon (IFN) and IFN-inducible MHC class I genes (the interferon consensus sequence (ICS)). Can both act as a transcriptional activator or repressor. Plays a negative regulatory role in cells of the immune system. Involved in CD8(+) dendritic cell differentiation by forming a complex with the BATF-JUNB heterodimer in immune cells, leading to recognition of AICE sequence (5'-TGAnTCA/GAAA-3'), an immune-specific regulatory element, followed by cooperative binding of BATF and IRF8 and activation of genes. Required for the development of plasmacytoid dendritic cells (pDCs), which produce most of the type I IFN in response to viral infection. Positively regulates macroautophagy in dendritic cells. Acts as a transcriptional repressor of osteoclast differentiation factors such as NFATC1 and EEIG1. This chain is Interferon regulatory factor 8, found in Mus musculus (Mouse).